The primary structure comprises 1424 residues: ABC multidrug transporter H (1424 aa).

The segment at 1 to 49 is disordered; sequence MEDQGHLPSEPRALFDRRDDTDSTNTALDETDLSRTPLQDTSHTPHAED. Residues 23 to 42 are compositionally biased toward polar residues; it reads STNTALDETDLSRTPLQDTS. 2 N-linked (GlcNAc...) asparagine glycosylation sites follow: Asn-79 and Asn-275. Positions 96 to 351 constitute an ABC transporter 1 domain; sequence LSQFNIPQHI…MEEQGFVCRE (256 aa). The next 7 membrane-spanning stretches (helical) occupy residues 488–508, 520–540, 544–564, 569–589, 605–625, 629–649, and 710–730; these read GLFI…LLAM, VLIK…IAQI, IPVL…MVGL, GAFF…TALF, VSGF…PYHA, WFIW…LLSI, and NFGI…IATS. The interval 760–782 is disordered; it reads EEAQLNEKAGHKGTGTDSEAQSN. Residues Asn-790 and Asn-798 are each glycosylated (N-linked (GlcNAc...) asparagine). Residues 794 to 1037 enclose the ABC transporter 2 domain; sequence FTWKNLTYTV…VKDYFARYGA (244 aa). An ATP-binding site is contributed by 830–837; that stretch reads GSSGAGKT. Transmembrane regions (helical) follow at residues 1131-1151, 1161-1181, 1200-1220, and 1240-1260; these read IALH…IGDS, TIFN…PLFI, VAFV…CAVL, and AIFF…QFIA. Asn-1265 carries N-linked (GlcNAc...) asparagine glycosylation. 2 helical membrane-spanning segments follow: residues 1268–1288 and 1300–1320; these read FAAL…GVLV and WIYW…FSVF. The N-linked (GlcNAc...) asparagine glycan is linked to Asn-1338. The helical transmembrane segment at 1395-1415 threads the bilayer; it reads TAIVCIFVLSSYALVYALMKL.

Belongs to the ABC transporter superfamily. ABCG family. PDR (TC 3.A.1.205) subfamily.

Its subcellular location is the cell membrane. Its activity is regulated as follows. The efflux inhibitor FK506 impairs the transport activity. Functionally, ABC efflux transporter that is able to transport rhodamine 6G (R-6G), a known substrate for many ABC transporters, but seems not to transport azoles. This chain is ABC multidrug transporter H, found in Aspergillus fumigatus (strain ATCC MYA-4609 / CBS 101355 / FGSC A1100 / Af293) (Neosartorya fumigata).